The following is a 503-amino-acid chain: AMP phosphorylase (503 aa).

AMP is bound by residues Gly168, Ser194–Ser199, and Thr203. Asp256 (proton donor) is an active-site residue. AMP is bound by residues Ser264 and Lys288.

Belongs to the thymidine/pyrimidine-nucleoside phosphorylase family. Type 2 subfamily.

The catalysed reaction is AMP + phosphate = alpha-D-ribose 1,5-bisphosphate + adenine. It carries out the reaction CMP + phosphate = cytosine + alpha-D-ribose 1,5-bisphosphate. It catalyses the reaction UMP + phosphate = alpha-D-ribose 1,5-bisphosphate + uracil. Catalyzes the conversion of AMP and phosphate to adenine and ribose 1,5-bisphosphate (R15P). Exhibits phosphorylase activity toward CMP and UMP in addition to AMP. Functions in an archaeal AMP degradation pathway, together with R15P isomerase and RubisCO. This is AMP phosphorylase (deoA) from Pyrococcus abyssi (strain GE5 / Orsay).